Reading from the N-terminus, the 297-residue chain is Large ribosomal subunit protein uL18 (297 aa).

This sequence belongs to the universal ribosomal protein uL18 family. As to quaternary structure, component of the large ribosomal subunit (LSU).

It localises to the cytoplasm. Its subcellular location is the nucleus. In terms of biological role, component of the ribosome, a large ribonucleoprotein complex responsible for the synthesis of proteins in the cell. The small ribosomal subunit (SSU) binds messenger RNAs (mRNAs) and translates the encoded message by selecting cognate aminoacyl-transfer RNA (tRNA) molecules. The large subunit (LSU) contains the ribosomal catalytic site termed the peptidyl transferase center (PTC), which catalyzes the formation of peptide bonds, thereby polymerizing the amino acids delivered by tRNAs into a polypeptide chain. The nascent polypeptides leave the ribosome through a tunnel in the LSU and interact with protein factors that function in enzymatic processing, targeting, and the membrane insertion of nascent chains at the exit of the ribosomal tunnel. The sequence is that of Large ribosomal subunit protein uL18 (RpL5) from Lysiphlebus testaceipes (Greenbugs aphid parastoid).